Consider the following 220-residue polypeptide: MSNTATDFVRFALDEGVLRFGSFKVKSGRMSPYFFNAGLFNSGRSVGKLAAFYAQALLDSGLNFDMLFGPAYKGIPLATATAVALAGHPQASGDIPFAYNRKEAKDHGEGGTLVGAPLAGRVVIIDDVITAGTSVRESVEIIRAAGAQPAAVLIAMDRMERAGPDEALSPHSAVQDVAKTYGIPVISIASLADILQLLQDDEQFAAHRDSVLAYREQYGV.

K26 lines the 5-phospho-alpha-D-ribose 1-diphosphate pocket. Orotate is bound at residue F34–F35. 5-phospho-alpha-D-ribose 1-diphosphate-binding positions include Y72–K73, R101, K102, K105, H107, and D126–S134. Residues T130 and R158 each contribute to the orotate site.

It belongs to the purine/pyrimidine phosphoribosyltransferase family. PyrE subfamily. In terms of assembly, homodimer. Mg(2+) is required as a cofactor.

The enzyme catalyses orotidine 5'-phosphate + diphosphate = orotate + 5-phospho-alpha-D-ribose 1-diphosphate. Its pathway is pyrimidine metabolism; UMP biosynthesis via de novo pathway; UMP from orotate: step 1/2. Its function is as follows. Catalyzes the transfer of a ribosyl phosphate group from 5-phosphoribose 1-diphosphate to orotate, leading to the formation of orotidine monophosphate (OMP). This chain is Orotate phosphoribosyltransferase, found in Bordetella avium (strain 197N).